A 412-amino-acid chain; its full sequence is Na(+)-translocating NADH-quinone reductase subunit B (412 aa).

3 consecutive transmembrane segments (helical) span residues 57–77 (MILV…NVGL), 127–147 (VFFL…EVLF), and 163–183 (SILF…ALGI). T236 carries the post-translational modification FMN phosphoryl threonine. A run of 5 helical transmembrane segments spans residues 270-290 (GSIG…ILFG), 297-317 (IVAG…VIGS), 322-342 (MFSM…GMMF), 358-378 (WSYG…NPAY), and 381-401 (GMML…YLVV).

The protein belongs to the NqrB/RnfD family. In terms of assembly, composed of six subunits; NqrA, NqrB, NqrC, NqrD, NqrE and NqrF. The cofactor is FMN.

It localises to the cell inner membrane. The catalysed reaction is a ubiquinone + n Na(+)(in) + NADH + H(+) = a ubiquinol + n Na(+)(out) + NAD(+). Functionally, NQR complex catalyzes the reduction of ubiquinone-1 to ubiquinol by two successive reactions, coupled with the transport of Na(+) ions from the cytoplasm to the periplasm. NqrA to NqrE are probably involved in the second step, the conversion of ubisemiquinone to ubiquinol. The sequence is that of Na(+)-translocating NADH-quinone reductase subunit B from Klebsiella pneumoniae (strain 342).